A 246-amino-acid polypeptide reads, in one-letter code: UDP-N-acetyl-D-mannosaminuronic acid transferase (246 aa).

It belongs to the glycosyltransferase 26 family.

The catalysed reaction is UDP-N-acetyl-alpha-D-mannosaminouronate + N-acetyl-alpha-D-glucosaminyl-di-trans,octa-cis-undecaprenyl diphosphate = beta-D-ManNAcA-(1-&gt;4)-alpha-D-GlcNAc-di-trans,octa-cis-undecaprenyl diphosphate + UDP + H(+). It functions in the pathway bacterial outer membrane biogenesis; enterobacterial common antigen biosynthesis. In terms of biological role, catalyzes the synthesis of Und-PP-GlcNAc-ManNAcA (Lipid II), the second lipid-linked intermediate involved in enterobacterial common antigen (ECA) synthesis. The polypeptide is UDP-N-acetyl-D-mannosaminuronic acid transferase (Escherichia coli O7:K1 (strain IAI39 / ExPEC)).